A 484-amino-acid chain; its full sequence is Ectonucleoside triphosphate diphosphohydrolase 6 (484 aa).

Residues 1–39 are Cytoplasmic-facing; it reads MKKGIRYETSRKTSYIFQQPQHGPWQTRMRKISNHGSLR. Residues 40 to 60 form a helical; Signal-anchor for type II membrane protein membrane-spanning segment; that stretch reads VAKVAYPLGLCVGVFIYVAYI. Residues 61–484 lie on the Lumenal side of the membrane; sequence KWHRATATQA…SLNRQKSPAS (424 aa). The N-linked (GlcNAc...) asparagine glycan is linked to Asn220. Residue Glu224 is the Proton acceptor of the active site. The N-linked (GlcNAc...) asparagine glycan is linked to Asn284. Cystine bridges form between Cys325/Cys356 and Cys416/Cys430.

Belongs to the GDA1/CD39 NTPase family. In terms of assembly, monomer. It depends on Ca(2+) as a cofactor. Mg(2+) serves as cofactor. In terms of processing, the secreted form may be produced by intracellular processing. Post-translationally, N-glycosylated. In terms of tissue distribution, expressed in most tissues, but predominantly in heart.

Its subcellular location is the golgi apparatus membrane. It localises to the secreted. It is found in the cell membrane. It catalyses the reaction a ribonucleoside 5'-diphosphate + H2O = a ribonucleoside 5'-phosphate + phosphate + H(+). The catalysed reaction is IDP + H2O = IMP + phosphate + H(+). It carries out the reaction GDP + H2O = GMP + phosphate + H(+). The enzyme catalyses UDP + H2O = UMP + phosphate + H(+). Its activity is regulated as follows. Glycosylation does not appear to be required for enzymatic activity. In terms of biological role, catalyzes the hydrolysis of nucleoside triphosphates and diphosphates in a calcium- or magnesium-dependent manner. Has a strong preference for nucleoside diphosphates, preferentially hydrolyzes GDP, IDP, and UDP, with slower hydrolysis of CDP, ITP, GTP, CTP, ADP, and UTP and virtually no hydrolysis of ATP. The membrane bound form might support glycosylation reactions in the Golgi apparatus and, when released from cells, might catalyze the hydrolysis of extracellular nucleotides. The chain is Ectonucleoside triphosphate diphosphohydrolase 6 (ENTPD6) from Homo sapiens (Human).